We begin with the raw amino-acid sequence, 23 residues long: Aurein-4.2 (23 aa).

The protein belongs to the frog skin active peptide (FSAP) family. Aurein subfamily. As to expression, expressed by the skin dorsal glands.

The protein localises to the secreted. In terms of biological role, has no antimicrobial or anticancer activity. The sequence is that of Aurein-4.2 from Ranoidea aurea (Green and golden bell frog).